Reading from the N-terminus, the 271-residue chain is Ribosomal RNA small subunit methyltransferase A (271 aa).

Positions 11, 13, 38, 59, 84, and 109 each coordinate S-adenosyl-L-methionine.

Belongs to the class I-like SAM-binding methyltransferase superfamily. rRNA adenine N(6)-methyltransferase family. RsmA subfamily.

The protein resides in the cytoplasm. It carries out the reaction adenosine(1518)/adenosine(1519) in 16S rRNA + 4 S-adenosyl-L-methionine = N(6)-dimethyladenosine(1518)/N(6)-dimethyladenosine(1519) in 16S rRNA + 4 S-adenosyl-L-homocysteine + 4 H(+). In terms of biological role, specifically dimethylates two adjacent adenosines (A1518 and A1519) in the loop of a conserved hairpin near the 3'-end of 16S rRNA in the 30S particle. May play a critical role in biogenesis of 30S subunits. The protein is Ribosomal RNA small subunit methyltransferase A of Nostoc sp. (strain PCC 7120 / SAG 25.82 / UTEX 2576).